We begin with the raw amino-acid sequence, 528 residues long: Dihydromonacolin L monooxygenase LovA (528 aa).

Over 1 to 23 (MTVDALTQPHHLLSLAWNDTQQH) the chain is Cytoplasmic. The helical; Signal-anchor for type II membrane protein transmembrane segment at 24 to 44 (GSWFAPLVTTSAGLLCLLLYL) threads the bilayer. The Lumenal portion of the chain corresponds to 45–528 (CSSGRRSELP…DEDIRLPGSL (484 aa)). Residue asparagine 399 is glycosylated (N-linked (GlcNAc...) asparagine). Cysteine 465 serves as a coordination point for heme.

This sequence belongs to the cytochrome P450 family. Heme is required as a cofactor.

It is found in the membrane. Its subcellular location is the endoplasmic reticulum membrane. It carries out the reaction dihydromonacolin L carboxylate + reduced [NADPH--hemoprotein reductase] + O2 = monacolin L carboxylate + oxidized [NADPH--hemoprotein reductase] + 2 H2O + H(+). It catalyses the reaction monacolin L carboxylate + reduced [NADPH--hemoprotein reductase] + O2 = monacolin J carboxylate + oxidized [NADPH--hemoprotein reductase] + H2O + H(+). Its pathway is polyketide biosynthesis; lovastatin biosynthesis. Dihydromonacolin L monooxygenase; part of the gene cluster that mediates the biosynthesis of lovastatin (also known as mevinolin, mevacor or monacolin K), a hypolipidemic inhibitor of (3S)-hydroxymethylglutaryl-coenzyme A (HMG-CoA) reductase (HMGR). The first step in the biosynthesis of lovastatin is the production of dihydromonacolin L acid by the lovastatin nonaketide synthase lovB and the trans-acting enoyl reductase lovC via condensation of one acetyl-CoA unit and 8 malonyl-CoA units. Dihydromonacolin L acid is released from lovB by the thioesterase lovG. Next, dihydromonacolin L acid is oxidized by the dihydromonacolin L monooxygenase lovA twice to form monacolin J acid. The 2-methylbutyrate moiety of lovastatin is synthesized by the lovastatin diketide synthase lovF via condensation of one acetyl-CoA unit and one malonyl-CoA unit. Finally, the covalent attachment of this moiety to monacolin J acid is catalyzed by the transesterase lovD to yield lovastatin. LovD has broad substrate specificity and can also convert monacolin J to simvastatin using alpha-dimethylbutanoyl-S-methyl-3-mercaptopropionate (DMB-S-MMP) as the thioester acyl donor, and can also catalyze the reverse reaction and function as hydrolase in vitro. LovD has much higher activity with LovF-bound 2-methylbutanoate than with free diketide substrates. This is Dihydromonacolin L monooxygenase LovA from Aspergillus terreus (strain NIH 2624 / FGSC A1156).